We begin with the raw amino-acid sequence, 356 residues long: GTPase Obg (356 aa).

One can recognise an Obg domain in the interval 2 to 160; sequence ESFVDEVAIE…KFLRLSLKLL (159 aa). The OBG-type G domain occupies 161-329; the sequence is ADVGIVGLPN…LLENMDEVFF (169 aa). GTP contacts are provided by residues 167-174, 192-196, 215-218, 282-285, and 310-312; these read GLPNAGKS, FTTLS, DIPG, NKID, and SAD. Serine 174 and threonine 194 together coordinate Mg(2+).

This sequence belongs to the TRAFAC class OBG-HflX-like GTPase superfamily. OBG GTPase family. In terms of assembly, monomer. Requires Mg(2+) as cofactor.

Its subcellular location is the cytoplasm. An essential GTPase which binds GTP, GDP and possibly (p)ppGpp with moderate affinity, with high nucleotide exchange rates and a fairly low GTP hydrolysis rate. Plays a role in control of the cell cycle, stress response, ribosome biogenesis and in those bacteria that undergo differentiation, in morphogenesis control. This Leptospira interrogans serogroup Icterohaemorrhagiae serovar copenhageni (strain Fiocruz L1-130) protein is GTPase Obg.